Here is a 185-residue protein sequence, read N- to C-terminus: Ribosome-recycling factor (185 aa).

This sequence belongs to the RRF family.

It localises to the cytoplasm. Its function is as follows. Responsible for the release of ribosomes from messenger RNA at the termination of protein biosynthesis. May increase the efficiency of translation by recycling ribosomes from one round of translation to another. In Pseudomonas putida (strain W619), this protein is Ribosome-recycling factor.